A 90-amino-acid polypeptide reads, in one-letter code: Small ribosomal subunit protein bS16 (90 aa).

This sequence belongs to the bacterial ribosomal protein bS16 family.

The protein is Small ribosomal subunit protein bS16 of Lactococcus lactis subsp. lactis (strain IL1403) (Streptococcus lactis).